A 1107-amino-acid chain; its full sequence is Probable chromatin-remodeling complex ATPase chain (1107 aa).

Disordered regions lie at residues 1–124 and 177–217; these read MAKP…KREK and GNQS…GSGG. 4 stretches are compositionally biased toward acidic residues: residues 8–25, 33–43, 53–65, and 89–114; these read DEEE…EEQS, GEEEDEEEEEA, GGEE…EEIE, and EGDE…DEAE. Residues 121-147 are a coiled coil; the sequence is KREKARLKEMQKLKKQKIQEILDTQNA. The span at 183 to 193 shows a compositional bias: basic residues; that stretch reads KKPRGRGRHAS. Positions 197–211 are enriched in acidic residues; the sequence is EEEEDEEYLKEEEDA. The region spanning 243–408 is the Helicase ATP-binding domain; sequence IRLYENGING…WSLLNFLLPE (166 aa). 256–263 lines the ATP pocket; sequence DEMGLGKT. The DEAH box motif lies at 359–362; it reads DEAH. The 152-residue stretch at 536–687 folds into the Helicase C-terminal domain; that stretch reads LLDKLLPKLK…ALVIQQGRLA (152 aa). SANT domains lie at 877-929 and 978-1039; these read EGFA…ERYK and QNKG…DTLI. Positions 1029-1067 form a coiled coil; sequence QELARRCDTLIRLVEKENQEYDEQERQARKDKRMAKNMT. The tract at residues 1049–1107 is disordered; the sequence is YDEQERQARKDKRMAKNMTPTKRSALRVSEGETTPSNSFKRRRQSLMDDYVGSGRRKRG.

It belongs to the SNF2/RAD54 helicase family. ISWI subfamily.

Its subcellular location is the nucleus. Possesses intrinsic ATP-dependent nucleosome-remodeling activity. Constitutes the catalytic subunit of several complexes capable of forming ordered nucleosome arrays on chromatin in vitro. In Oryza sativa subsp. japonica (Rice), this protein is Probable chromatin-remodeling complex ATPase chain.